We begin with the raw amino-acid sequence, 272 residues long: MLEVSSHNVWTALAVTLAAGLATGLGSLMVVFAKKPNPRLLAFGLAFAGGAMVFVSLSEILNKSIASFSNAYNDKLGFTYGTLTFLGGMLLIMVIDRLVPNPHQSLSTDDPQFRDDNRAYIRRVGLLTAVAITAHNFPEGLATFFATLESPAVGMPLAFAIAIHNIPEGIAIAVPVYFATRNKFYAFGASLLSGLAEPIGAGIGYLLLSSVLSEAVFGAVFGVIAGVMVFLALDELLPAAKRYAQGHETVYGLVSGMGTLAISLVLFRYAAP.

Helical transmembrane passes span 12–32 (ALAVTLAAGLATGLGSLMVVF), 40–60 (LLAFGLAFAGGAMVFVSLSEI), 76–96 (LGFTYGTLTFLGGMLLIMVID), 126–146 (LLTAVAITAHNFPEGLATFFA), 158–178 (AFAIAIHNIPEGIAIAVPVYF), 187–207 (FGASLLSGLAEPIGAGIGYLL), 211–231 (VLSEAVFGAVFGVIAGVMVFL), and 247–267 (HETVYGLVSGMGTLAISLVLF). Fe(2+) contacts are provided by Asn136 and Glu139. Residues Glu139 and His164 each coordinate Zn(2+). Residues Asn165, Glu168, and Glu197 each contribute to the Fe(2+) site. Position 168 (Glu168) interacts with Zn(2+).

The protein belongs to the ZIP transporter (TC 2.A.5) family. ZupT subfamily.

It is found in the cell inner membrane. The enzyme catalyses Zn(2+)(in) = Zn(2+)(out). Mediates zinc uptake. May also transport other divalent cations. In Xanthomonas campestris pv. campestris (strain ATCC 33913 / DSM 3586 / NCPPB 528 / LMG 568 / P 25), this protein is Zinc transporter ZupT.